We begin with the raw amino-acid sequence, 772 residues long: Semaphorin-3A (772 aa).

An N-terminal signal peptide occupies residues 1–22 (MGWLRGIALLSLGVLLAGRVNC). Residues 31–514 (RLKLSYKEML…SATGVSQLPL (484 aa)) enclose the Sema domain. N53 is a glycosylation site (N-linked (GlcNAc...) asparagine). The cysteines at positions 103 and 114 are disulfide-linked. A glycan (N-linked (GlcNAc...) asparagine) is linked at N125. Disulfide bonds link C132-C141, C269-C381, C293-C341, and C517-C535. The 90-residue stretch at 576-665 (PSGQTLEEKI…GFIQTLLKVT (90 aa)) folds into the Ig-like C2-type domain. An N-linked (GlcNAc...) asparagine glycan is attached at N591. A disulfide bond links C650 and C723. The interval 730–772 (DRKQRRQRPANAQVNTNKWKHLQENKKGRNRRTHEFERAPRSV) is disordered. Residues 750 to 772 (HLQENKKGRNRRTHEFERAPRSV) are compositionally biased toward basic and acidic residues.

It belongs to the semaphorin family. Expressed at relatively high levels in brain and muscle, moderate levels in lung, bursa, and heart and virtually absent in liver. Collapsin-1, -2, -3, and -5 bind to overlapping but distinct axon tracts.

It is found in the secreted. In terms of biological role, induces the collapse and paralysis of neuronal growth cones. Could serve as a ligand that guides specific growth cones by a motility-inhibiting mechanism. Binds to neuropilin. This is Semaphorin-3A (SEMA3A) from Gallus gallus (Chicken).